Reading from the N-terminus, the 347-residue chain is Holliday junction branch migration complex subunit RuvB (347 aa).

Positions 1 to 183 (MTDVPRMVTP…FGIPVRLNFY (183 aa)) are large ATPase domain (RuvB-L). ATP contacts are provided by residues Leu-22, Arg-23, Gly-64, Lys-67, Thr-68, Thr-69, 130–132 (EDF), Arg-173, Tyr-183, and Arg-220. Thr-68 contributes to the Mg(2+) binding site. Positions 184–254 (TVDELEKIVS…IADHALGALE (71 aa)) are small ATPAse domain (RuvB-S). The interval 257 to 347 (AAGLDAMDRR…QFGLFGGEDE (91 aa)) is head domain (RuvB-H). 3 residues coordinate DNA: Arg-293, Arg-312, and Arg-317.

Belongs to the RuvB family. In terms of assembly, homohexamer. Forms an RuvA(8)-RuvB(12)-Holliday junction (HJ) complex. HJ DNA is sandwiched between 2 RuvA tetramers; dsDNA enters through RuvA and exits via RuvB. An RuvB hexamer assembles on each DNA strand where it exits the tetramer. Each RuvB hexamer is contacted by two RuvA subunits (via domain III) on 2 adjacent RuvB subunits; this complex drives branch migration. In the full resolvosome a probable DNA-RuvA(4)-RuvB(12)-RuvC(2) complex forms which resolves the HJ.

Its subcellular location is the cytoplasm. The catalysed reaction is ATP + H2O = ADP + phosphate + H(+). In terms of biological role, the RuvA-RuvB-RuvC complex processes Holliday junction (HJ) DNA during genetic recombination and DNA repair, while the RuvA-RuvB complex plays an important role in the rescue of blocked DNA replication forks via replication fork reversal (RFR). RuvA specifically binds to HJ cruciform DNA, conferring on it an open structure. The RuvB hexamer acts as an ATP-dependent pump, pulling dsDNA into and through the RuvAB complex. RuvB forms 2 homohexamers on either side of HJ DNA bound by 1 or 2 RuvA tetramers; 4 subunits per hexamer contact DNA at a time. Coordinated motions by a converter formed by DNA-disengaged RuvB subunits stimulates ATP hydrolysis and nucleotide exchange. Immobilization of the converter enables RuvB to convert the ATP-contained energy into a lever motion, pulling 2 nucleotides of DNA out of the RuvA tetramer per ATP hydrolyzed, thus driving DNA branch migration. The RuvB motors rotate together with the DNA substrate, which together with the progressing nucleotide cycle form the mechanistic basis for DNA recombination by continuous HJ branch migration. Branch migration allows RuvC to scan DNA until it finds its consensus sequence, where it cleaves and resolves cruciform DNA. The protein is Holliday junction branch migration complex subunit RuvB of Nitrobacter hamburgensis (strain DSM 10229 / NCIMB 13809 / X14).